The following is a 500-amino-acid chain: Carnosic acid synthase (500 aa).

A helical transmembrane segment spans residues 4–24 (LILLSLAFLASCVVAYSRRRP). Cysteine 443 is a binding site for heme.

This sequence belongs to the cytochrome P450 family. The cofactor is heme. As to expression, mostly expressed in young leaves, particularly in glandular trichomes.

The protein resides in the membrane. It carries out the reaction 11-hydroxyferruginol + 3 reduced [NADPH--hemoprotein reductase] + 3 O2 = carnosate + 3 oxidized [NADPH--hemoprotein reductase] + 4 H2O + 4 H(+). It catalyses the reaction miltiradiene + 2 reduced [NADPH--hemoprotein reductase] + 2 O2 = miltiradien-20-al + 2 oxidized [NADPH--hemoprotein reductase] + 3 H2O + 2 H(+). The catalysed reaction is ferruginol + 3 reduced [NADPH--hemoprotein reductase] + 3 O2 = pisiferate + 3 oxidized [NADPH--hemoprotein reductase] + 4 H2O + 4 H(+). It functions in the pathway secondary metabolite biosynthesis; terpenoid biosynthesis. Monooxygenase involved in the biosynthesis of carnosate, a potent antioxidant labdane-related diterpene natural product. Catalyzes the oxidation of 11-hydroxyferruginol to produce carnosate. Mediates the conversion of miltiradien into miltiradien-20-al. Also involved in the production of pisiferic acid and derivative products from ferruginol. The protein is Carnosic acid synthase of Salvia fruticosa (Greek sage).